Here is a 159-residue protein sequence, read N- to C-terminus: SsrA-binding protein (159 aa).

A disordered region spans residues 134–159 (KEHDKRDTERDRDWSRDKERLMKHNA).

This sequence belongs to the SmpB family.

The protein resides in the cytoplasm. Required for rescue of stalled ribosomes mediated by trans-translation. Binds to transfer-messenger RNA (tmRNA), required for stable association of tmRNA with ribosomes. tmRNA and SmpB together mimic tRNA shape, replacing the anticodon stem-loop with SmpB. tmRNA is encoded by the ssrA gene; the 2 termini fold to resemble tRNA(Ala) and it encodes a 'tag peptide', a short internal open reading frame. During trans-translation Ala-aminoacylated tmRNA acts like a tRNA, entering the A-site of stalled ribosomes, displacing the stalled mRNA. The ribosome then switches to translate the ORF on the tmRNA; the nascent peptide is terminated with the 'tag peptide' encoded by the tmRNA and targeted for degradation. The ribosome is freed to recommence translation, which seems to be the essential function of trans-translation. The polypeptide is SsrA-binding protein (Marinomonas sp. (strain MWYL1)).